The following is a 192-amino-acid chain: Protein ORF45 (192 aa).

Plays a role in the expression of ORF41, which itself is required for late gene expression. The sequence is that of Protein ORF45 from Autographa californica nuclear polyhedrosis virus (AcMNPV).